Consider the following 75-residue polypeptide: Small ribosomal subunit protein bS18 (75 aa).

This sequence belongs to the bacterial ribosomal protein bS18 family. Part of the 30S ribosomal subunit. Forms a tight heterodimer with protein bS6.

In terms of biological role, binds as a heterodimer with protein bS6 to the central domain of the 16S rRNA, where it helps stabilize the platform of the 30S subunit. This Moorella thermoacetica (strain ATCC 39073 / JCM 9320) protein is Small ribosomal subunit protein bS18.